The following is an 855-amino-acid chain: RE1-silencing transcription factor (855 aa).

A C2H2-type 1 zinc finger spans residues 141–163 (FFCKPCQYQGENEQEFIVHIRTH). The tract at residues 172-199 (NGGDSDEDLSADAGPQTSVPNAESAESN) is disordered. Positions 186-199 (PQTSVPNAESAESN) are enriched in polar residues. 7 C2H2-type zinc fingers span residues 204 to 226 (IRCERCGYNTNRFDHYMAHLKHH), 236 to 258 (FKCTICAYTTISQYHWKKHLRNH), 264 to 286 (FTCSQCSYFSDRKNNYIQHIRTH), 292 to 314 (FQCIYCEYSSSQKTHLTRHMRTH), 320 to 343 (FKCDNCSYLAANQHEVTRHARQVH), 349 to 371 (LSCPYCQYKTADRSNFKKHVELH), and 377 to 400 (FLCPVCKYAASKKCNLQYHIKSRH). Residues 458-811 (NAVVETEKSS…ETPTEERDAS (354 aa)) are disordered. Composition is skewed to basic and acidic residues over residues 462-472 (ETEKSSKKNMD), 481-496 (NEKKSSSKNDPKEKTA), and 504-535 (AVKDTEETQTEDTRVNNKKETKKAVKSAEKAL). Over residues 548 to 569 (SSVQQQSDDCEQTQHTPQQNET) the composition is skewed to polar residues. The span at 570–580 (QENRPEKENRS) shows a compositional bias: basic and acidic residues. A compositionally biased stretch (basic residues) spans 594-604 (QTKKPCKKQTK). Positions 628 to 638 (RKAENPAEPKQ) are enriched in basic and acidic residues. Positions 639–648 (RIKRTKKKKD) are enriched in basic residues. Positions 652–662 (PTTSEANQTNP) are enriched in polar residues. Composition is skewed to basic and acidic residues over residues 711 to 721 (PAVEDVQRPLE) and 799 to 811 (KLPETPTEERDAS). The segment at 818–840 (HTCIFCDRSFALEMDYRKHLNRH) adopts a C2H2-type 9 zinc-finger fold.

The protein resides in the nucleus. It is found in the cytoplasm. Transcriptional repressor which binds neuron-restrictive silencer element (NRSE) and represses neuronal gene transcription in non-neuronal cells. This chain is RE1-silencing transcription factor (rest), found in Danio rerio (Zebrafish).